Reading from the N-terminus, the 127-residue chain is Ribonuclease P protein component (127 aa).

The protein belongs to the RnpA family. Consists of a catalytic RNA component (M1 or rnpB) and a protein subunit.

The enzyme catalyses Endonucleolytic cleavage of RNA, removing 5'-extranucleotides from tRNA precursor.. Its function is as follows. RNaseP catalyzes the removal of the 5'-leader sequence from pre-tRNA to produce the mature 5'-terminus. It can also cleave other RNA substrates such as 4.5S RNA. The protein component plays an auxiliary but essential role in vivo by binding to the 5'-leader sequence and broadening the substrate specificity of the ribozyme. The chain is Ribonuclease P protein component from Synechococcus sp. (strain RCC307).